Reading from the N-terminus, the 291-residue chain is Kynurenine formamidase (291 aa).

Residues 33–37 (HGGAW) carry the HGGXW motif. The Nucleophile role is filled by Ser107. Residues Asp242 and His280 contribute to the active site.

This sequence belongs to the kynurenine formamidase family. In terms of assembly, homodimer.

The catalysed reaction is N-formyl-L-kynurenine + H2O = L-kynurenine + formate + H(+). It participates in amino-acid degradation; L-tryptophan degradation via kynurenine pathway; L-kynurenine from L-tryptophan: step 2/2. Its function is as follows. Catalyzes the hydrolysis of N-formyl-L-kynurenine to L-kynurenine, the second step in the kynurenine pathway of tryptophan degradation. Kynurenine may be further oxidized to nicotinic acid, NAD(H) and NADP(H). Required for elimination of toxic metabolites. In Debaryomyces hansenii (strain ATCC 36239 / CBS 767 / BCRC 21394 / JCM 1990 / NBRC 0083 / IGC 2968) (Yeast), this protein is Kynurenine formamidase.